Consider the following 509-residue polypeptide: MAYLIDIPFEYFSSFLGVHPDQLKLLFCFLSAYPFAGILKRLPSAPWIRNLFSISIGLFYLIGVHHLYDGVLVLLFDALFTYFVAAFYRSSRMPWIIFIVILGHTFSSHVIRYIYPSENTDITASQMVLCMKLTAFAWSVYDGRLPSSELSSYQKDRALRKIPNILYFLGYVFFFPSLLVGPAFDYVDYERFITLSMFKPLADPYEKQITPHSLEPALGRCWRGLLWLILFITGSSIYPLKFLLTPKFASSPILLKYGYVCITAFVARMKYYGAWELSDGACILSGIGYNGLDSSKHPRWDRVKNIDPIKFEFADNIKCALEAWNMNTNKWLRNYVYLRVAKKGKRPGFKSTLSTFTVSAMWHGVSAGYYLTFVSAAFIQTVAKYTRRHVRPFFLKPDMETPGPFKRVYDVIGMVATNLSLSYLIISFLLLNLKESIHVWKELYFIVHIYILIALAVFNSPIRSKLDNKIRSRVNSYKLKSYEQSMKSTSDTDMLNMSVPKREDFENDE.

At 1 to 14 (MAYLIDIPFEYFSS) the chain is on the lumenal side. The helical transmembrane segment at 15-35 (FLGVHPDQLKLLFCFLSAYPF) threads the bilayer. Topologically, residues 36–55 (AGILKRLPSAPWIRNLFSIS) are cytoplasmic. The helical transmembrane segment at 56 to 76 (IGLFYLIGVHHLYDGVLVLLF) threads the bilayer. The Lumenal segment spans residues 77 to 94 (DALFTYFVAAFYRSSRMP). The helical transmembrane segment at 95-115 (WIIFIVILGHTFSSHVIRYIY) threads the bilayer. The Cytoplasmic portion of the chain corresponds to 116 to 223 (PSENTDITAS…LEPALGRCWR (108 aa)). The chain crosses the membrane as a helical span at residues 224–244 (GLLWLILFITGSSIYPLKFLL). The Lumenal segment spans residues 245 to 246 (TP). Residues 247 to 267 (KFASSPILLKYGYVCITAFVA) form a helical membrane-spanning segment. Residues 268-410 (RMKYYGAWEL…TPGPFKRVYD (143 aa)) are Cytoplasmic-facing. The active site involves H363. The helical transmembrane segment at 411–431 (VIGMVATNLSLSYLIISFLLL) threads the bilayer. The Lumenal segment spans residues 432–441 (NLKESIHVWK). The chain crosses the membrane as a helical span at residues 442–462 (ELYFIVHIYILIALAVFNSPI). The Cytoplasmic portion of the chain corresponds to 463-509 (RSKLDNKIRSRVNSYKLKSYEQSMKSTSDTDMLNMSVPKREDFENDE). The interval 488 to 509 (STSDTDMLNMSVPKREDFENDE) is disordered. S490 carries the post-translational modification Phosphoserine. Basic and acidic residues predominate over residues 500–509 (PKREDFENDE).

Belongs to the membrane-bound acyltransferase family.

It is found in the endoplasmic reticulum membrane. The protein localises to the microsome membrane. The enzyme catalyses a 1-acyl-sn-glycero-3-phosphate + an acyl-CoA = a 1,2-diacyl-sn-glycero-3-phosphate + CoA. It carries out the reaction a 1-acyl-sn-glycero-3-phosphocholine + an acyl-CoA = a 1,2-diacyl-sn-glycero-3-phosphocholine + CoA. It catalyses the reaction a 1-acyl-sn-glycero-3-phosphoethanolamine + an acyl-CoA = a 1,2-diacyl-sn-glycero-3-phosphoethanolamine + CoA. In terms of biological role, membrane-bound O-acyltransferase that mediates the incorporation of unsaturated acyl chains into the sn-2 position of phospholipids. This chain is Lysophospholipid acyltransferase (ale1), found in Schizosaccharomyces pombe (strain 972 / ATCC 24843) (Fission yeast).